The sequence spans 220 residues: Deoxyribose-phosphate aldolase (220 aa).

Asp-89 serves as the catalytic Proton donor/acceptor. Lys-151 functions as the Schiff-base intermediate with acetaldehyde in the catalytic mechanism. Lys-180 acts as the Proton donor/acceptor in catalysis.

This sequence belongs to the DeoC/FbaB aldolase family. DeoC type 1 subfamily.

Its subcellular location is the cytoplasm. The enzyme catalyses 2-deoxy-D-ribose 5-phosphate = D-glyceraldehyde 3-phosphate + acetaldehyde. It participates in carbohydrate degradation; 2-deoxy-D-ribose 1-phosphate degradation; D-glyceraldehyde 3-phosphate and acetaldehyde from 2-deoxy-alpha-D-ribose 1-phosphate: step 2/2. Its function is as follows. Catalyzes a reversible aldol reaction between acetaldehyde and D-glyceraldehyde 3-phosphate to generate 2-deoxy-D-ribose 5-phosphate. The sequence is that of Deoxyribose-phosphate aldolase from Staphylococcus epidermidis (strain ATCC 12228 / FDA PCI 1200).